We begin with the raw amino-acid sequence, 735 residues long: 1,4-alpha-glucan branching enzyme GlgB 1 (735 aa).

Aspartate 418 (nucleophile) is an active-site residue. The active-site Proton donor is glutamate 471.

The protein belongs to the glycosyl hydrolase 13 family. GlgB subfamily. In terms of assembly, monomer.

The catalysed reaction is Transfers a segment of a (1-&gt;4)-alpha-D-glucan chain to a primary hydroxy group in a similar glucan chain.. It functions in the pathway glycan biosynthesis; glycogen biosynthesis. Catalyzes the formation of the alpha-1,6-glucosidic linkages in glycogen by scission of a 1,4-alpha-linked oligosaccharide from growing alpha-1,4-glucan chains and the subsequent attachment of the oligosaccharide to the alpha-1,6 position. The protein is 1,4-alpha-glucan branching enzyme GlgB 1 of Rhizobium johnstonii (strain DSM 114642 / LMG 32736 / 3841) (Rhizobium leguminosarum bv. viciae).